The primary structure comprises 266 residues: UPF0354 protein lmo1608 (266 aa).

The protein belongs to the UPF0354 family.

This Listeria monocytogenes serovar 1/2a (strain ATCC BAA-679 / EGD-e) protein is UPF0354 protein lmo1608.